The sequence spans 200 residues: Glutathione S-transferase 1-1 (200 aa).

Positions 1–73 (GSSPCRSVIM…YLVEKYGKTD (73 aa)) constitute a GST N-terminal domain. Residues Ser2, 43-45 (HTI), and 57-59 (ESR) contribute to the glutathione site. The GST C-terminal domain maps to 79 to 200 (CPKKRAVINQ…AGCLEFKKYF (122 aa)).

It belongs to the GST superfamily. Theta family. In terms of assembly, homodimer.

The enzyme catalyses RX + glutathione = an S-substituted glutathione + a halide anion + H(+). The catalysed reaction is 1,1,1-trichloro-2,2-bis(4-chlorophenyl)ethane = 1,1-dichloro-2,2-bis(4-chlorophenyl)ethylene + chloride + H(+). Functionally, conjugation of reduced glutathione to a wide number of exogenous and endogenous hydrophobic electrophiles. Has DDT dehydrochlorinase activity. This chain is Glutathione S-transferase 1-1 (GstD1), found in Drosophila teissieri (Fruit fly).